A 579-amino-acid polypeptide reads, in one-letter code: Eukaryotic translation initiation factor 3 subunit D (579 aa).

Disordered stretches follow at residues 1–20 (MASF…GPAS), 51–72 (NASG…RARD), and 109–170 (RRGG…FGWK). Residues 51–64 (NASGASNDAANARG) show a composition bias toward low complexity. Residues 120–167 (GGRGGRGGAGGAGAAGGRGASKFGAGAGRGARGGRGGAAGARRGGGRF) are compositionally biased toward gly residues. Positions 307-321 (AFDYLTVNENAADPP) are RNA gate.

Belongs to the eIF-3 subunit D family. Component of the eukaryotic translation initiation factor 3 (eIF-3) complex.

It localises to the cytoplasm. Functionally, mRNA cap-binding component of the eukaryotic translation initiation factor 3 (eIF-3) complex, which is involved in protein synthesis of a specialized repertoire of mRNAs and, together with other initiation factors, stimulates binding of mRNA and methionyl-tRNAi to the 40S ribosome. The eIF-3 complex specifically targets and initiates translation of a subset of mRNAs involved in cell proliferation. In the eIF-3 complex, eif3d specifically recognizes and binds the 7-methylguanosine cap of a subset of mRNAs. The chain is Eukaryotic translation initiation factor 3 subunit D from Mycosarcoma maydis (Corn smut fungus).